A 352-amino-acid polypeptide reads, in one-letter code: MSTSQTDNVKASTHATEYDSVTNNIVVAALYKFTRFADFEKYRDPILNTMLDNDVKGTLLIASEGINGTISGTRQGIDNVLDYLRSIEEIGSFTFKESYTDAQPFYRTKVKLKKEIVTMGVENIDPLQSVGRYVKPSDWNALISDPDVILIDTRNDYEVKIGTFQNAVNPNTETFREFPEYVAKELDPSKHKKVAMFCTGGIRCEKSTAFMREQGFEEVYHLEGGILKYLEEVPASDSMWEGDCFVFDNRVSVNHNLEKGSYEQCFACRMPITQAEMQSPAYIKGESCPHCIDKATDEQKARFREREHQMQLAQKRGEAHIGSDVIDVIEKRKAAKIEARRQADAANKTKAG.

Positions 144 to 238 (SDPDVILIDT…YLEEVPASDS (95 aa)) constitute a Rhodanese domain. Cys-198 acts as the Cysteine persulfide intermediate in catalysis.

It belongs to the TrhO family.

It catalyses the reaction uridine(34) in tRNA + AH2 + O2 = 5-hydroxyuridine(34) in tRNA + A + H2O. Catalyzes oxygen-dependent 5-hydroxyuridine (ho5U) modification at position 34 in tRNAs. The protein is tRNA uridine(34) hydroxylase of Psychrobacter cryohalolentis (strain ATCC BAA-1226 / DSM 17306 / VKM B-2378 / K5).